The primary structure comprises 200 residues: uncharacterized protein (200 aa).

Functionally, involved in osmoadaptation. This is an uncharacterized protein from Emericella nidulans (strain FGSC A4 / ATCC 38163 / CBS 112.46 / NRRL 194 / M139) (Aspergillus nidulans).